The following is a 302-amino-acid chain: 4-hydroxy-tetrahydrodipicolinate synthase (302 aa).

Residue T46 coordinates pyruvate. The Proton donor/acceptor role is filled by Y134. K162 functions as the Schiff-base intermediate with substrate in the catalytic mechanism. I204 lines the pyruvate pocket.

The protein belongs to the DapA family. In terms of assembly, homotetramer; dimer of dimers.

The protein resides in the cytoplasm. The catalysed reaction is L-aspartate 4-semialdehyde + pyruvate = (2S,4S)-4-hydroxy-2,3,4,5-tetrahydrodipicolinate + H2O + H(+). Its pathway is amino-acid biosynthesis; L-lysine biosynthesis via DAP pathway; (S)-tetrahydrodipicolinate from L-aspartate: step 3/4. Functionally, catalyzes the condensation of (S)-aspartate-beta-semialdehyde [(S)-ASA] and pyruvate to 4-hydroxy-tetrahydrodipicolinate (HTPA). This chain is 4-hydroxy-tetrahydrodipicolinate synthase, found in Xanthomonas axonopodis pv. citri (strain 306).